Consider the following 247-residue polypeptide: 5'-nucleotidase SurE (247 aa).

A divalent metal cation contacts are provided by Asp8, Asp9, Ser39, and Asn91.

It belongs to the SurE nucleotidase family. Requires a divalent metal cation as cofactor.

Its subcellular location is the cytoplasm. It catalyses the reaction a ribonucleoside 5'-phosphate + H2O = a ribonucleoside + phosphate. Its function is as follows. Nucleotidase that shows phosphatase activity on nucleoside 5'-monophosphates. The polypeptide is 5'-nucleotidase SurE (Methylobacillus flagellatus (strain ATCC 51484 / DSM 6875 / VKM B-1610 / KT)).